A 205-amino-acid chain; its full sequence is Cytochrome c oxidase subunit 3 (205 aa).

Helical transmembrane passes span 29 to 49 (TIVF…MYFV), 73 to 93 (LAIT…VFAA), 104 to 124 (WFLI…YEYF), 144 to 164 (ITTG…VVVL), and 184 to 204 (SYYW…IYFI).

This sequence belongs to the cytochrome c oxidase subunit 3 family. As to quaternary structure, associates with subunits I, II and IV to form cytochrome c oxidase.

It localises to the cell membrane. It carries out the reaction 4 Fe(II)-[cytochrome c] + O2 + 8 H(+)(in) = 4 Fe(III)-[cytochrome c] + 2 H2O + 4 H(+)(out). The sequence is that of Cytochrome c oxidase subunit 3 (ctaE) from Corynebacterium efficiens (strain DSM 44549 / YS-314 / AJ 12310 / JCM 11189 / NBRC 100395).